The chain runs to 122 residues: Large ribosomal subunit protein uL14 (122 aa).

The protein belongs to the universal ribosomal protein uL14 family. Part of the 50S ribosomal subunit. Forms a cluster with proteins L3 and L19. In the 70S ribosome, L14 and L19 interact and together make contacts with the 16S rRNA in bridges B5 and B8.

Its function is as follows. Binds to 23S rRNA. Forms part of two intersubunit bridges in the 70S ribosome. The sequence is that of Large ribosomal subunit protein uL14 from Pseudomonas entomophila (strain L48).